Consider the following 429-residue polypeptide: Probable M18 family aminopeptidase 2 (429 aa).

Zn(2+)-binding residues include histidine 82, histidine 156, and histidine 401.

The protein belongs to the peptidase M18 family. The cofactor is Zn(2+).

This chain is Probable M18 family aminopeptidase 2, found in Ectopseudomonas mendocina (strain ymp) (Pseudomonas mendocina).